We begin with the raw amino-acid sequence, 670 residues long: Solute carrier organic anion transporter family member 1A6 (670 aa).

Residues 1 to 20 (MGEPGKRVGIHRVRCFAKIK) are Cytoplasmic-facing. Residues 21–40 (VFLLALIWAYISKILSGVYM) traverse the membrane as a helical segment. The Extracellular portion of the chain corresponds to 41–59 (STMLTQLERQFNISTSIVG). A glycan (N-linked (GlcNAc...) asparagine) is linked at asparagine 52. A helical transmembrane segment spans residues 60-80 (LINGSFEMGNLLVIVFVSYFG). The Cytoplasmic portion of the chain corresponds to 81 to 86 (TKLHRP). The chain crosses the membrane as a helical span at residues 87–111 (IMIGVGCAVMGLGCFIISLPHFLMG). Residues 112-155 (RYEYETTISPTSNLSSNSFLCVENRSQTLKPTQDPAECVKEIKS) are Extracellular-facing. N-linked (GlcNAc...) asparagine glycans are attached at residues asparagine 124 and asparagine 135. The helical transmembrane segment at 156–184 (LMWIYVLVGNIIRGIGETPIMPLGISYIE) threads the bilayer. Topologically, residues 185-203 (DFAKSENSPLYIGILEVGK) are cytoplasmic. A helical membrane pass occupies residues 204–224 (MIGPILGYLMGPFCANIYVDT). The Extracellular portion of the chain corresponds to 225–242 (GSVNTDDLTITPTDTRWV). The chain crosses the membrane as a helical span at residues 243–267 (GAWWIGFLVCAGVNVLTSIPFFFFP). The Cytoplasmic segment spans residues 268-311 (KTLPKEGLQDNGDGTENAKEEKHRDKAKEENQGIIKEFFLMMKN). The chain crosses the membrane as a helical span at residues 312 to 333 (LFCNPIYMLCVLTSVLQVNGVA). Over 334 to 353 (NIVIYKPKYLEHHFGISTAK) the chain is Extracellular. The chain crosses the membrane as a helical span at residues 354–377 (AVFLIGLYTTPSVSAGYLISGFIM). The Cytoplasmic portion of the chain corresponds to 378–381 (KKLK). A helical membrane pass occupies residues 382–405 (ITLKKAAIIALCLFMSECLLSLCN). The Extracellular segment spans residues 406-513 (FMLTCDTTPI…PDCANKLQYF (108 aa)). One can recognise a Kazal-like domain in the interval 433–488 (NKFLSDCNTRCNCLTKTWDPVCGNNGLAYMSPCLAGCEKSVGTGANMVFQNCSCIR). Cystine bridges form between cysteine 439–cysteine 469, cysteine 445–cysteine 465, and cysteine 454–cysteine 486. 2 N-linked (GlcNAc...) asparagine glycosylation sites follow: asparagine 483 and asparagine 492. Residues 514-536 (LIITVFCCFFYSLATIPGYMVFL) form a helical membrane-spanning segment. The Cytoplasmic segment spans residues 537–545 (RCMKSEEKS). Residues 546-571 (LGIGLQAFFMRLFAGIPAPIYFGALI) traverse the membrane as a helical segment. Residues 572-605 (DRTCLHWGTLKCGEPGACRTYEVSSFRRLYLGLP) lie on the Extracellular side of the membrane. A helical membrane pass occupies residues 606-623 (AALRGSIILPSFFILRLI). Residues 624 to 670 (RKLQIPGDTDSSEIELAETKPTEKESECTDMHKSSKVENDGELKTKL) lie on the Cytoplasmic side of the membrane. A Phosphothreonine modification is found at threonine 632. The tract at residues 633-670 (DSSEIELAETKPTEKESECTDMHKSSKVENDGELKTKL) is disordered. Serine 634 and serine 635 each carry phosphoserine. Basic and acidic residues predominate over residues 640 to 670 (AETKPTEKESECTDMHKSSKVENDGELKTKL).

It belongs to the organo anion transporter (TC 2.A.60) family. Kidney specific.

It is found in the cell membrane. Functionally, may mediate the Na(+)-independent transport of organic anions. The polypeptide is Solute carrier organic anion transporter family member 1A6 (Slco1a6) (Mus musculus (Mouse)).